The following is a 376-amino-acid chain: MSKRDFYEVLGVPKNASDDELKKAYRKLAMKYHPDRNQGDAAKPAEEKFKEAKEAYEILSDAQKRAAYDQYGHAGVDPNMRGGMGGAEGFGGFAEAFGDIFGDMFGGARGRGGRQVYRGNDLSYAMDVTLEEAAKGKEAQIRIPSWESCETCHGSGAKPGTSAKTCGTCQGSGTVQMRQGFFSVQQTCPHCRGTGKIIPEPCTACHGQGRVKKQKTLEVKIPAGIDDGMRIRSTGNGEPGTNGGPPGDLYIEIRIRKHDIFERDGDDLHCQVPVSFITAALGGEIEVPTLQGKAAIDIPEGTQAGKQFRLRGKGIKGVRASYPGDLYCHIIVETPVKLTEHQRKLLKELDESLKKGGAKHSPSTESWTDRLKSFFS.

Residues 5–72 (DFYEVLGVPK…QKRAAYDQYG (68 aa)) enclose the J domain. The CR-type zinc finger occupies 136–214 (GKEAQIRIPS…CHGQGRVKKQ (79 aa)). Residues cysteine 149, cysteine 152, cysteine 166, cysteine 169, cysteine 188, cysteine 191, cysteine 202, and cysteine 205 each coordinate Zn(2+). CXXCXGXG motif repeat units follow at residues 149–156 (CETCHGSG), 166–173 (CGTCQGSG), 188–195 (CPHCRGTG), and 202–209 (CTACHGQG). 2 disordered regions span residues 227–246 (DGMRIRSTGNGEPGTNGGPP) and 354–376 (KKGGAKHSPSTESWTDRLKSFFS). Residues 237-246 (GEPGTNGGPP) show a composition bias toward gly residues. Over residues 367–376 (WTDRLKSFFS) the composition is skewed to basic and acidic residues.

This sequence belongs to the DnaJ family. In terms of assembly, homodimer. The cofactor is Zn(2+).

It is found in the cytoplasm. Participates actively in the response to hyperosmotic and heat shock by preventing the aggregation of stress-denatured proteins and by disaggregating proteins, also in an autonomous, DnaK-independent fashion. Unfolded proteins bind initially to DnaJ; upon interaction with the DnaJ-bound protein, DnaK hydrolyzes its bound ATP, resulting in the formation of a stable complex. GrpE releases ADP from DnaK; ATP binding to DnaK triggers the release of the substrate protein, thus completing the reaction cycle. Several rounds of ATP-dependent interactions between DnaJ, DnaK and GrpE are required for fully efficient folding. Also involved, together with DnaK and GrpE, in the DNA replication of plasmids through activation of initiation proteins. In Acidovorax ebreus (strain TPSY) (Diaphorobacter sp. (strain TPSY)), this protein is Chaperone protein DnaJ.